Here is a 173-residue protein sequence, read N- to C-terminus: MAKRRKSSRTKAKETNWQERVIQIRRVSKVVKGGKKLSFRAIVVVGNENGQVGVGVGKAGDVIGAVRKGVADGKKQLIDVSLTKASSITHITRGVSGGAKVIVRPAAPGTGVIAGGAVRTVLELAGVKNILAKQLGSSNPLNNARAVINALEGLRTFSEVAQERGVPLEHLYT.

Residues 17 to 80 form the S5 DRBM domain; it reads WQERVIQIRR…ADGKKQLIDV (64 aa).

The protein belongs to the universal ribosomal protein uS5 family. As to quaternary structure, part of the 30S ribosomal subunit. Contacts proteins S4 and S8.

Its function is as follows. With S4 and S12 plays an important role in translational accuracy. Functionally, located at the back of the 30S subunit body where it stabilizes the conformation of the head with respect to the body. The sequence is that of Small ribosomal subunit protein uS5 from Rippkaea orientalis (strain PCC 8801 / RF-1) (Cyanothece sp. (strain PCC 8801)).